We begin with the raw amino-acid sequence, 379 residues long: MATSETRVLFLSLCLILGKVVLSQFDELWLVGDDDPLNALQTRRERREERCDYSVGKWTFDETYPLYDSSCPYLSSALSCQRNGRPDSYYQKWRWIPKACSLPRFDALKFLGKMRGKRIMLVGDSMMRNQWESLVCLVQSVLPTHRKKLTYNGPTMSFHSLDFETSIEFCWAPLLVELKRGVDRKRVLHLDSIEDNARYWRGVDVLVFDSAHWWTHSQRWSSWDYYMDGNKIFKAMDPMVAYERGLTTWAKWVEINLDPSKTKVIFRTVSPRESGQMCYNQKHPLPSLSSSTKPHVPQQSRVLNKVLRTMKYRVYLYDITTMSAYRRDGHPSVFKRAMHEEEKHHRIAGPSSDCSHWCLPGVPDIWNEMLSSIILTNAV.

The chain crosses the membrane as a helical; Signal-anchor for type II membrane protein span at residues 8-24 (VLFLSLCLILGKVVLSQ). Positions 123–125 (GDS) match the GDS motif motif. The DCXHWCLPGXXDXWN motif signature appears at 353 to 367 (DCSHWCLPGVPDIWN).

The protein belongs to the PC-esterase family. TBL subfamily.

It is found in the membrane. Its function is as follows. May act as a bridging protein that binds pectin and other cell wall polysaccharides. Probably involved in maintaining esterification of pectins. May be involved in the specific O-acetylation of cell wall polymers. The chain is Protein trichome birefringence-like 36 (TBL36) from Arabidopsis thaliana (Mouse-ear cress).